Consider the following 351-residue polypeptide: Histidinol-phosphate aminotransferase (351 aa).

Lys213 is modified (N6-(pyridoxal phosphate)lysine).

This sequence belongs to the class-II pyridoxal-phosphate-dependent aminotransferase family. Histidinol-phosphate aminotransferase subfamily. As to quaternary structure, homodimer. Pyridoxal 5'-phosphate is required as a cofactor.

It carries out the reaction L-histidinol phosphate + 2-oxoglutarate = 3-(imidazol-4-yl)-2-oxopropyl phosphate + L-glutamate. It functions in the pathway amino-acid biosynthesis; L-histidine biosynthesis; L-histidine from 5-phospho-alpha-D-ribose 1-diphosphate: step 7/9. This Thermoanaerobacter sp. (strain X514) protein is Histidinol-phosphate aminotransferase.